We begin with the raw amino-acid sequence, 151 residues long: D-aminoacyl-tRNA deacylase (151 aa).

The Gly-cisPro motif, important for rejection of L-amino acids motif lies at 137 to 138 (GP).

Belongs to the DTD family. As to quaternary structure, homodimer.

It is found in the cytoplasm. It carries out the reaction glycyl-tRNA(Ala) + H2O = tRNA(Ala) + glycine + H(+). The catalysed reaction is a D-aminoacyl-tRNA + H2O = a tRNA + a D-alpha-amino acid + H(+). Functionally, an aminoacyl-tRNA editing enzyme that deacylates mischarged D-aminoacyl-tRNAs. Also deacylates mischarged glycyl-tRNA(Ala), protecting cells against glycine mischarging by AlaRS. Acts via tRNA-based rather than protein-based catalysis; rejects L-amino acids rather than detecting D-amino acids in the active site. By recycling D-aminoacyl-tRNA to D-amino acids and free tRNA molecules, this enzyme counteracts the toxicity associated with the formation of D-aminoacyl-tRNA entities in vivo and helps enforce protein L-homochirality. The chain is D-aminoacyl-tRNA deacylase from Protochlamydia amoebophila (strain UWE25).